A 518-amino-acid polypeptide reads, in one-letter code: Cell wall biosynthesis protein LcpA (518 aa).

Over 1–31 (MTEKYRPVRDIKPAPAAMQSTKQAGHPVFRS) the chain is Cytoplasmic. Residues 32 to 52 (VVAFVSVLVLLVSGLGYLAVG) form a helical membrane-spanning segment. Over 53–518 (KVDGVASGNL…AGGDGPRCVN (466 aa)) the chain is Periplasmic. Positions 485-518 (AVTSSTVGQPGADVGEPIESPEFDAGGDGPRCVN) are disordered.

It belongs to the LytR/CpsA/Psr (LCP) family. In terms of assembly, forms homodimers and homotetramers.

It localises to the cell inner membrane. Its function is as follows. Involved in cell wall biosynthesis. May be responsible for the transfer of arabinogalactan onto peptidoglycan. In vitro, has pyrophosphatase activity. The protein is Cell wall biosynthesis protein LcpA of Corynebacterium glutamicum (strain ATCC 13032 / DSM 20300 / JCM 1318 / BCRC 11384 / CCUG 27702 / LMG 3730 / NBRC 12168 / NCIMB 10025 / NRRL B-2784 / 534).